The following is a 310-amino-acid chain: 4-hydroxyproline 2-epimerase (310 aa).

The active-site Proton acceptor is the Cys85. Residues 86–87 (GH), His205, and Asp231 contribute to the substrate site. Cys235 acts as the Proton donor in catalysis. A substrate-binding site is contributed by 236–237 (GT).

The protein belongs to the proline racemase family.

It carries out the reaction trans-4-hydroxy-L-proline = cis-4-hydroxy-D-proline. Functionally, catalyzes the epimerization of trans-4-hydroxy-L-proline (t4LHyp) to cis-4-hydroxy-D-proline (c4DHyp). May be involved in a degradation pathway of t4LHyp, which would allow L.aggregata to grow on t4LHyp as a sole carbon source. Displays no proline racemase activity. The chain is 4-hydroxyproline 2-epimerase from Roseibium aggregatum (strain ATCC 25650 / DSM 13394 / JCM 20685 / NBRC 16684 / NCIMB 2208 / IAM 12614 / B1) (Stappia aggregata).